Reading from the N-terminus, the 1232-residue chain is DNA-directed RNA polymerase subunit beta (1232 aa).

Residues 1170–1232 (SVDEDADELE…LDLDDFGDEH (63 aa)) are disordered. Positions 1171–1180 (VDEDADELEV) are enriched in acidic residues. Residues 1189-1198 (PEEKEEKEKE) are compositionally biased toward basic and acidic residues. The segment covering 1199–1232 (DSDEYDDLREEDVEPDLEELSLDDLDLDDFGDEH) has biased composition (acidic residues).

Belongs to the RNA polymerase beta chain family. As to quaternary structure, the RNAP catalytic core consists of 2 alpha, 1 beta, 1 beta' and 1 omega subunit. When a sigma factor is associated with the core the holoenzyme is formed, which can initiate transcription.

It carries out the reaction RNA(n) + a ribonucleoside 5'-triphosphate = RNA(n+1) + diphosphate. Functionally, DNA-dependent RNA polymerase catalyzes the transcription of DNA into RNA using the four ribonucleoside triphosphates as substrates. The protein is DNA-directed RNA polymerase subunit beta of Clostridium botulinum (strain Okra / Type B1).